A 365-amino-acid polypeptide reads, in one-letter code: DNA replication and repair protein RecF (365 aa).

30–37 (GANGQGKT) contributes to the ATP binding site.

It belongs to the RecF family.

Its subcellular location is the cytoplasm. The RecF protein is involved in DNA metabolism; it is required for DNA replication and normal SOS inducibility. RecF binds preferentially to single-stranded, linear DNA. It also seems to bind ATP. The chain is DNA replication and repair protein RecF from Geobacter sulfurreducens (strain ATCC 51573 / DSM 12127 / PCA).